The sequence spans 212 residues: Adenylate kinase (212 aa).

An ATP-binding site is contributed by 10–15 (GAGKGT). The tract at residues 30-59 (STGDMFRAAIANQTEMGVLAKSYIDKGELV) is NMP. AMP contacts are provided by residues Thr31, Arg36, 57–59 (ELV), 86–89 (GYPR), and Gln93. Positions 127 to 159 (GRIIHRETGETFHKVFNPPADYKEEDYYQREDD) are LID. ATP contacts are provided by residues Arg128 and 137 to 138 (TF). Arg156 and Arg167 together coordinate AMP. Gln195 provides a ligand contact to ATP.

The protein belongs to the adenylate kinase family. Monomer.

The protein localises to the cytoplasm. It carries out the reaction AMP + ATP = 2 ADP. It participates in purine metabolism; AMP biosynthesis via salvage pathway; AMP from ADP: step 1/1. In terms of biological role, catalyzes the reversible transfer of the terminal phosphate group between ATP and AMP. Plays an important role in cellular energy homeostasis and in adenine nucleotide metabolism. This is Adenylate kinase from Streptococcus sanguinis (strain SK36).